We begin with the raw amino-acid sequence, 142 residues long: Large ribosomal subunit protein uL11 (142 aa).

It belongs to the universal ribosomal protein uL11 family. In terms of assembly, part of the ribosomal stalk of the 50S ribosomal subunit. Interacts with L10 and the large rRNA to form the base of the stalk. L10 forms an elongated spine to which L12 dimers bind in a sequential fashion forming a multimeric L10(L12)X complex. One or more lysine residues are methylated.

In terms of biological role, forms part of the ribosomal stalk which helps the ribosome interact with GTP-bound translation factors. The polypeptide is Large ribosomal subunit protein uL11 (Maricaulis maris (strain MCS10) (Caulobacter maris)).